Here is a 474-residue protein sequence, read N- to C-terminus: Trehalose-6-phosphate synthase (474 aa).

Arg-10 is a binding site for D-glucose 6-phosphate. Position 22-23 (Gly-22–Gly-23) interacts with UDP-alpha-D-glucose. Residues Tyr-77 and Asp-131 each contribute to the D-glucose 6-phosphate site. 2 residues coordinate UDP-alpha-D-glucose: Arg-263 and Lys-268. D-glucose 6-phosphate is bound at residue Arg-301. Residues Phe-340 and Leu-366 to Glu-370 contribute to the UDP-alpha-D-glucose site.

The protein belongs to the glycosyltransferase 20 family. As to quaternary structure, homotetramer.

The catalysed reaction is D-glucose 6-phosphate + UDP-alpha-D-glucose = alpha,alpha-trehalose 6-phosphate + UDP + H(+). It functions in the pathway glycan biosynthesis; trehalose biosynthesis. Its function is as follows. Probably involved in the osmoprotection via the biosynthesis of trehalose. Catalyzes the transfer of glucose from UDP-alpha-D-glucose (UDP-Glc) to D-glucose 6-phosphate (Glc-6-P) to form trehalose-6-phosphate. Acts with retention of the anomeric configuration of the UDP-sugar donor. This chain is Trehalose-6-phosphate synthase, found in Enterobacter sp. (strain 638).